A 6269-amino-acid polypeptide reads, in one-letter code: Nonribosomal peptide synthetase 1 (6269 aa).

The interval E249–I781 is adenylation 1. A Carrier 1 domain is found at R803–T879. At S840 the chain carries O-(pantetheine 4'-phosphoryl)serine. Positions L894–L1342 are epimerase 1. Residues S1373–H1775 form a condensation 1 region. The adenylation 2 stretch occupies residues H1725–R2333. The segment at K2364–T2386 is disordered. Over residues P2367–S2376 the composition is skewed to low complexity. Over residues A2377 to T2386 the composition is skewed to polar residues. The tract at residues W2597 to Y2670 is condensation 2. Residues R2845–R3368 are adenylation 3. The region spanning A3392–Q3468 is the Carrier 2 domain. At S3429 the chain carries O-(pantetheine 4'-phosphoryl)serine. A condensation 3 region spans residues C3512–L3898. An adenylation 4 region spans residues D3919–I4454. The Carrier 3 domain maps to E4487–T4563. An O-(pantetheine 4'-phosphoryl)serine modification is found at S4524. Positions L4578–D5024 are epimerase 2. Positions S5052 to L5466 are condensation 4. Positions S5552–N5628 constitute a Carrier 4 domain. S5589 carries the O-(pantetheine 4'-phosphoryl)serine modification. A disordered region spans residues N5628–N5658. Residues N5642–R5657 show a composition bias toward basic and acidic residues. Residues F5720 to S6067 form a condensation 5 region. Positions S6139–N6220 constitute a Carrier 5 domain.

This sequence belongs to the NRP synthetase family. In terms of processing, the thiolation domains are 4'-phosphopantetheinylated.

In terms of biological role, nonribosomal peptide synthesis (NRPS) is a key mechanism responsible for the biosynthesis of bioactive metabolites which are potentially contributing to organismal virulence. Contributes to improved fungal tolerance against oxidative stress, during the infection process. This Aspergillus fumigatus (strain ATCC MYA-4609 / CBS 101355 / FGSC A1100 / Af293) (Neosartorya fumigata) protein is Nonribosomal peptide synthetase 1 (NRPS1).